Here is a 239-residue protein sequence, read N- to C-terminus: 7-cyano-7-deazaguanine synthase (239 aa).

8-18 contacts ATP; sequence LSGGLDSPTVL. Residues C188, C196, C199, and C202 each contribute to the Zn(2+) site.

Belongs to the QueC family. The cofactor is Zn(2+).

It carries out the reaction 7-carboxy-7-deazaguanine + NH4(+) + ATP = 7-cyano-7-deazaguanine + ADP + phosphate + H2O + H(+). The protein operates within purine metabolism; 7-cyano-7-deazaguanine biosynthesis. Catalyzes the ATP-dependent conversion of 7-carboxy-7-deazaguanine (CDG) to 7-cyano-7-deazaguanine (preQ(0)). The sequence is that of 7-cyano-7-deazaguanine synthase from Picrophilus torridus (strain ATCC 700027 / DSM 9790 / JCM 10055 / NBRC 100828 / KAW 2/3).